The primary structure comprises 446 residues: Exodeoxyribonuclease 7 large subunit (446 aa).

Belongs to the XseA family. Heterooligomer composed of large and small subunits.

It is found in the cytoplasm. The enzyme catalyses Exonucleolytic cleavage in either 5'- to 3'- or 3'- to 5'-direction to yield nucleoside 5'-phosphates.. Bidirectionally degrades single-stranded DNA into large acid-insoluble oligonucleotides, which are then degraded further into small acid-soluble oligonucleotides. In Staphylococcus carnosus (strain TM300), this protein is Exodeoxyribonuclease 7 large subunit.